We begin with the raw amino-acid sequence, 231 residues long: Large ribosomal subunit protein uL1 (231 aa).

Belongs to the universal ribosomal protein uL1 family. Part of the 50S ribosomal subunit.

Binds directly to 23S rRNA. The L1 stalk is quite mobile in the ribosome, and is involved in E site tRNA release. Functionally, protein L1 is also a translational repressor protein, it controls the translation of the L11 operon by binding to its mRNA. The chain is Large ribosomal subunit protein uL1 from Hydrogenovibrio crunogenus (strain DSM 25203 / XCL-2) (Thiomicrospira crunogena).